Reading from the N-terminus, the 156-residue chain is Envelope glycoprotein L (156 aa).

Positions 1–16 (MSPLVAVLVFFSAALG) are cleaved as a signal peptide. The tract at residues 21 to 141 (GVAGNPHGLD…KELGEVAVHK (121 aa)) is interaction with gH. A gL alphaherpesvirus-type domain is found at 50-156 (ELEWDDEDHP…LRYNGGPPAE (107 aa)). Cys71 and Cys95 are disulfide-bonded.

The protein belongs to the herpesviridae glycoprotein L (gL) family. Alphaherpesvirinae gL subfamily. Interacts with glycoprotein H (gH); this interaction is necessary for the correct processing and cell surface expression of gH. The heterodimer gH/gL seems to interact with gB trimers during fusion. O-glycosylated, and sialylated.

It is found in the virion membrane. The protein resides in the host cell membrane. It localises to the host Golgi apparatus. Its subcellular location is the host trans-Golgi network. Functionally, the heterodimer glycoprotein H-glycoprotein L is required for the fusion of viral and plasma membranes leading to virus entry into the host cell. Acts as a functional inhibitor of gH and maintains gH in an inhibited form. Upon binding to host integrins, gL dissociates from gH leading to activation of the viral fusion glycoproteins gB and gH. This chain is Envelope glycoprotein L, found in Sus scrofa (Pig).